A 692-amino-acid polypeptide reads, in one-letter code: Meiotic sister-chromatid recombination protein 6, mitochondrial (692 aa).

The N-terminal 30 residues, 1-30 (MLSHNALRAFDCSKVIISRRCLTSSTSIYQ), are a transit peptide targeting the mitochondrion.

Its subcellular location is the mitochondrion. In terms of biological role, may be involved in the control of meiotic sister-chromatid recombination. The chain is Meiotic sister-chromatid recombination protein 6, mitochondrial (MSC6) from Saccharomyces cerevisiae (strain ATCC 204508 / S288c) (Baker's yeast).